We begin with the raw amino-acid sequence, 218 residues long: Adenylate kinase (218 aa).

10-15 (GAGKGT) is an ATP binding site. Residues 30-59 (STGDMLRAAIQAQTPLGLEAKKVMDDGKLV) form an NMP region. Residues T31, R36, 57–59 (KLV), 85–88 (GFPR), and Q92 contribute to the AMP site. The LID stretch occupies residues 122–159 (GRRVHLASGRTYHVIFNPPKKEGVDDITGEPLIQREDD). ATP-binding positions include R123 and 132-133 (TY). Residues R156 and R167 each contribute to the AMP site. G203 is a binding site for ATP.

It belongs to the adenylate kinase family. In terms of assembly, monomer.

The protein resides in the cytoplasm. The enzyme catalyses AMP + ATP = 2 ADP. Its pathway is purine metabolism; AMP biosynthesis via salvage pathway; AMP from ADP: step 1/1. In terms of biological role, catalyzes the reversible transfer of the terminal phosphate group between ATP and AMP. Plays an important role in cellular energy homeostasis and in adenine nucleotide metabolism. This chain is Adenylate kinase, found in Prosthecochloris aestuarii (strain DSM 271 / SK 413).